The chain runs to 217 residues: Uracil-DNA glycosylase (217 aa).

D62 functions as the Proton acceptor in the catalytic mechanism.

Belongs to the uracil-DNA glycosylase (UDG) superfamily. UNG family.

The protein localises to the cytoplasm. The enzyme catalyses Hydrolyzes single-stranded DNA or mismatched double-stranded DNA and polynucleotides, releasing free uracil.. Its function is as follows. Excises uracil residues from the DNA which can arise as a result of misincorporation of dUMP residues by DNA polymerase or due to deamination of cytosine. The chain is Uracil-DNA glycosylase from Streptococcus equi subsp. zooepidemicus (strain MGCS10565).